The sequence spans 368 residues: Ferredoxin--NADP reductase (368 aa).

Residues Asp-56, Gln-64, Tyr-69, Val-109, Phe-144, Asp-310, and Thr-351 each coordinate FAD.

It belongs to the ferredoxin--NADP reductase type 2 family. Homodimer. FAD is required as a cofactor.

The catalysed reaction is 2 reduced [2Fe-2S]-[ferredoxin] + NADP(+) + H(+) = 2 oxidized [2Fe-2S]-[ferredoxin] + NADPH. In Leptothrix cholodnii (strain ATCC 51168 / LMG 8142 / SP-6) (Leptothrix discophora (strain SP-6)), this protein is Ferredoxin--NADP reductase.